Here is a 209-residue protein sequence, read N- to C-terminus: Lipopolysaccharide export system protein LptC (209 aa).

Residues 7–26 form a helical membrane-spanning segment; that stretch reads NIRWNVILGVIALCALAWFY.

This sequence belongs to the LptC family. In terms of assembly, component of the lipopolysaccharide transport and assembly complex. Interacts with LptA and the LptBFG transporter complex.

Its subcellular location is the cell inner membrane. Involved in the assembly of lipopolysaccharide (LPS). Required for the translocation of LPS from the inner membrane to the outer membrane. Facilitates the transfer of LPS from the inner membrane to the periplasmic protein LptA. Could be a docking site for LptA. The polypeptide is Lipopolysaccharide export system protein LptC (Haemophilus influenzae (strain ATCC 51907 / DSM 11121 / KW20 / Rd)).